The chain runs to 129 residues: Histone H2A.J (129 aa).

The interval 1 to 22 (MSGRGKQGGKVRAKAKSRSSRA) is disordered. Residues lysine 6 and lysine 10 each carry the N6-acetyllysine modification. The segment covering 7-19 (QGGKVRAKAKSRS) has biased composition (basic residues). An N6-lactoyllysine; alternate modification is found at lysine 10. Glutamine 105 carries the post-translational modification N5-methylglutamine. Residue threonine 121 is modified to Phosphothreonine; by DCAF1.

Belongs to the histone H2A family. The nucleosome is a histone octamer containing two molecules each of H2A, H2B, H3 and H4 assembled in one H3-H4 heterotetramer and two H2A-H2B heterodimers. The octamer wraps approximately 147 bp of DNA. In terms of processing, glutamine methylation at Gln-105 (H2AQ104me) by FBL is specifically dedicated to polymerase I. It is present at 35S ribosomal DNA locus and impairs binding of the FACT complex. Monoubiquitination of Lys-120 (H2AXK119ub) gives a specific tag for epigenetic transcriptional repression. Following DNA double-strand breaks (DSBs), it is ubiquitinated through 'Lys-63' linkage of ubiquitin moieties. Post-translationally, phosphorylation on Ser-2 (H2AS1ph) is enhanced during mitosis. Phosphorylation on Ser-2 by RPS6KA5/MSK1 directly represses transcription. Acetylation of H3 inhibits Ser-2 phosphorylation by RPS6KA5/MSK1. Phosphorylation at Thr-121 (H2AT120ph) by DCAF1 is present in the regulatory region of many tumor suppresor genes and down-regulates their transcription.

Its subcellular location is the nucleus. The protein resides in the chromosome. Core component of nucleosome. Nucleosomes wrap and compact DNA into chromatin, limiting DNA accessibility to the cellular machineries which require DNA as a template. Histones thereby play a central role in transcription regulation, DNA repair, DNA replication and chromosomal stability. DNA accessibility is regulated via a complex set of post-translational modifications of histones, also called histone code, and nucleosome remodeling. The chain is Histone H2A.J from Bos taurus (Bovine).